Here is a 62-residue protein sequence, read N- to C-terminus: Putative antitoxin AF_1095 (62 aa).

It belongs to the UPF0165 family.

Its function is as follows. Possibly the antitoxin component of a type II toxin-antitoxin (TA) system. This Archaeoglobus fulgidus (strain ATCC 49558 / DSM 4304 / JCM 9628 / NBRC 100126 / VC-16) protein is Putative antitoxin AF_1095.